A 28-amino-acid polypeptide reads, in one-letter code: Putative fruR/shl operon leader peptide (28 aa).

This Escherichia coli O6:H1 (strain CFT073 / ATCC 700928 / UPEC) protein is Putative fruR/shl operon leader peptide (fruL).